A 147-amino-acid polypeptide reads, in one-letter code: D-aminoacyl-tRNA deacylase (147 aa).

The short motif at 136–137 is the Gly-cisPro motif, important for rejection of L-amino acids element; sequence GP.

The protein belongs to the DTD family. As to quaternary structure, homodimer.

It is found in the cytoplasm. The enzyme catalyses glycyl-tRNA(Ala) + H2O = tRNA(Ala) + glycine + H(+). It carries out the reaction a D-aminoacyl-tRNA + H2O = a tRNA + a D-alpha-amino acid + H(+). In terms of biological role, an aminoacyl-tRNA editing enzyme that deacylates mischarged D-aminoacyl-tRNAs. Also deacylates mischarged glycyl-tRNA(Ala), protecting cells against glycine mischarging by AlaRS. Acts via tRNA-based rather than protein-based catalysis; rejects L-amino acids rather than detecting D-amino acids in the active site. By recycling D-aminoacyl-tRNA to D-amino acids and free tRNA molecules, this enzyme counteracts the toxicity associated with the formation of D-aminoacyl-tRNA entities in vivo and helps enforce protein L-homochirality. The chain is D-aminoacyl-tRNA deacylase from Streptococcus pneumoniae (strain Taiwan19F-14).